Reading from the N-terminus, the 113-residue chain is Flagellar hook-basal body complex protein FliE (113 aa).

It belongs to the FliE family.

Its subcellular location is the bacterial flagellum basal body. This chain is Flagellar hook-basal body complex protein FliE, found in Rhizobium etli (strain ATCC 51251 / DSM 11541 / JCM 21823 / NBRC 15573 / CFN 42).